The following is a 241-amino-acid chain: Enolase-phosphatase E1 (241 aa).

Mg(2+) contacts are provided by D9 and E11. Residues 133 to 134 (SS) and K172 each bind substrate. D198 serves as a coordination point for Mg(2+).

Belongs to the HAD-like hydrolase superfamily. MasA/MtnC family. Monomer. Mg(2+) serves as cofactor.

The protein resides in the cytoplasm. It is found in the nucleus. The enzyme catalyses 5-methylsulfanyl-2,3-dioxopentyl phosphate + H2O = 1,2-dihydroxy-5-(methylsulfanyl)pent-1-en-3-one + phosphate. The protein operates within amino-acid biosynthesis; L-methionine biosynthesis via salvage pathway; L-methionine from S-methyl-5-thio-alpha-D-ribose 1-phosphate: step 3/6. It participates in amino-acid biosynthesis; L-methionine biosynthesis via salvage pathway; L-methionine from S-methyl-5-thio-alpha-D-ribose 1-phosphate: step 4/6. Functionally, bifunctional enzyme that catalyzes the enolization of 2,3-diketo-5-methylthiopentyl-1-phosphate (DK-MTP-1-P) into the intermediate 2-hydroxy-3-keto-5-methylthiopentenyl-1-phosphate (HK-MTPenyl-1-P), which is then dephosphorylated to form the acireductone 1,2-dihydroxy-3-keto-5-methylthiopentene (DHK-MTPene). This Scheffersomyces stipitis (strain ATCC 58785 / CBS 6054 / NBRC 10063 / NRRL Y-11545) (Yeast) protein is Enolase-phosphatase E1.